The primary structure comprises 163 residues: Nucleotide-binding protein Noca_0564 (163 aa).

The protein belongs to the YajQ family.

Functionally, nucleotide-binding protein. The protein is Nucleotide-binding protein Noca_0564 of Nocardioides sp. (strain ATCC BAA-499 / JS614).